The chain runs to 130 residues: Small ribosomal subunit protein uS9 (130 aa).

The protein belongs to the universal ribosomal protein uS9 family.

The polypeptide is Small ribosomal subunit protein uS9 (Streptococcus gordonii (strain Challis / ATCC 35105 / BCRC 15272 / CH1 / DL1 / V288)).